Reading from the N-terminus, the 126-residue chain is Alpha-lactalbumin (126 aa).

Residues 1–126 form the C-type lysozyme domain; that stretch reads KVFEKCELSQ…CIADLDQWKC (126 aa). Cystine bridges form between cysteine 6-cysteine 126, cysteine 30-cysteine 117, cysteine 63-cysteine 82, and cysteine 78-cysteine 96. Asparagine 47 is a glycosylation site (N-linked (GlcNAc...) asparagine). Residues lysine 84, aspartate 87, aspartate 89, aspartate 92, and aspartate 93 each contribute to the Ca(2+) site.

The protein belongs to the glycosyl hydrolase 22 family. As to quaternary structure, lactose synthase (LS) is a heterodimer of a catalytic component, beta1,4-galactosyltransferase (beta4Gal-T1) and a regulatory component, alpha-lactalbumin (LA). In terms of tissue distribution, mammary gland specific. Secreted in milk.

The protein localises to the secreted. Its function is as follows. Regulatory subunit of lactose synthase, changes the substrate specificity of galactosyltransferase in the mammary gland making glucose a good acceptor substrate for this enzyme. This enables LS to synthesize lactose, the major carbohydrate component of milk. In other tissues, galactosyltransferase transfers galactose onto the N-acetylglucosamine of the oligosaccharide chains in glycoproteins. This is Alpha-lactalbumin (LALBA) from Tachyglossus aculeatus aculeatus (Southeast Australian short-beaked echidna).